A 98-amino-acid polypeptide reads, in one-letter code: Beta-elicitin MGM-beta (98 aa).

3 disulfides stabilise this stretch: C3-C71, C27-C56, and C51-C95.

This sequence belongs to the elicitin family.

It is found in the secreted. In terms of biological role, induces local and distal defense responses (incompatible hypersensitive reaction) in plants from the solanaceae and cruciferae families. Elicits leaf necrosis and causes the accumulation of pathogenesis-related proteins. Might interact with the lipidic molecules of the plasma membrane. The polypeptide is Beta-elicitin MGM-beta (Phytophthora megasperma (Potato pink rot fungus)).